Reading from the N-terminus, the 906-residue chain is Centromere protein C (906 aa).

2 stretches are compositionally biased toward polar residues: residues 56 to 74 (SLTS…SSSK) and 87 to 96 (SSRTGEASLQ). Disordered stretches follow at residues 56 to 115 (SLTS…NEVH) and 141 to 169 (QKAA…NKNI). Phosphoserine is present on residues Ser71 and Ser94. Residues 97 to 108 (ASAEPSEAAGGS) show a composition bias toward low complexity. Glycyl lysine isopeptide (Lys-Gly) (interchain with G-Cter in SUMO2) cross-links involve residues Lys150 and Lys182. A disordered region spans residues 197–224 (VEDNLSKGQEGTSSEITQKRDDLSSDVQ). The segment covering 202 to 212 (SKGQEGTSSEI) has biased composition (polar residues). The Nuclear localization signal motif lies at 228 to 242 (KKNFSELFLETVKRK). Glycyl lysine isopeptide (Lys-Gly) (interchain with G-Cter in SUMO2) cross-links involve residues Lys229, Lys240, Lys242, and Lys266. 3 disordered regions span residues 294–320 (RHLS…KSHS), 341–596 (AQLS…SLAI), and 623–671 (EYTS…EQDQ). Phosphoserine occurs at positions 302, 344, 363, and 404. Over residues 402 to 424 (GQSSWENSNVSNTGQDKLQINSK) the composition is skewed to polar residues. Positions 426–450 (NMKDCEEVRNEPNPKKQKPALENKK) are enriched in basic and acidic residues. Residues 449–466 (KKKTNSTQTNKEKSGKKF) carry the Nuclear localization signal motif. A compositionally biased stretch (low complexity) spans 465–474 (KFFSGGSKNK). Polar residues predominate over residues 481–494 (TLTSRRSCRISQRP). At Ser495 the chain carries Phosphoserine. Over residues 496 to 512 (EWWRVKSDESSVDRNPS) the composition is skewed to basic and acidic residues. A Glycyl lysine isopeptide (Lys-Gly) (interchain with G-Cter in SUMO2) cross-link involves residue Lys501. Ser505 is modified (phosphoserine). Residues 523–546 (NKKKQTKRNHVSKRAGKKPGSSKR) are compositionally biased toward basic residues. The Nuclear localization signal motif lies at 525–540 (KKQTKRNHVSKRAGKK). Residues 626–637 (SKTQMESASNSE) are compositionally biased toward polar residues. Lys640 participates in a covalent cross-link: Glycyl lysine isopeptide (Lys-Gly) (interchain with G-Cter in SUMO2). Phosphoserine is present on residues Ser647 and Ser673. Lys692 is covalently cross-linked (Glycyl lysine isopeptide (Lys-Gly) (interchain with G-Cter in SUMO2)). Positions 702–724 (VRRSNRIRLKPLEYWRGERVDYQ) are MIF2 homology domain II. Phosphoserine occurs at positions 728 and 737. A Nuclear localization signal motif is present at residues 744–762 (KIKAQRNLGKVNKKVTKKP). Lys770 is covalently cross-linked (Glycyl lysine isopeptide (Lys-Gly) (interchain with G-Cter in SUMO2)). The segment at 853–906 (LVFYVNFGDLLCTLHETPYKLTTGDSFYVPSGNHYNIKNLLNVESSLLFTQIKR) is MIF2 homology domain III.

It belongs to the CENP-C/MIF2 family. Oligomer. Component of the CENPA-NAC complex, at least composed of CENPA, CENPC, CENPH, CENPM, CENPN, CENPT and CENPU. The CENPA-NAC complex interacts with the CENPA-CAD complex, composed of CENPI, CENPK, CENPL, CENPO, CENPP, CENPQ, CENPR and CENPS. Binds to DAXX. Interacts with DNMT3B. Interacts directly with CENPA. Identified in a centromere complex containing histones H2A, H2B and H4, and at least CENPA, CENPB, CENPC, CENPT, CENPN, HJURP, SUPT16H, SSRP1 and RSF1. Interacts with MEIKIN.

It localises to the nucleus. The protein localises to the chromosome. Its subcellular location is the centromere. The protein resides in the kinetochore. Component of the CENPA-NAC (nucleosome-associated) complex, a complex that plays a central role in assembly of kinetochore proteins, mitotic progression and chromosome segregation. The CENPA-NAC complex recruits the CENPA-CAD (nucleosome distal) complex and may be involved in incorporation of newly synthesized CENPA into centromeres. CENPC recruits DNA methylation and DNMT3B to both centromeric and pericentromeric satellite repeats and regulates the histone code in these regions. In Mus musculus (Mouse), this protein is Centromere protein C (Cenpc).